Consider the following 118-residue polypeptide: MPRVKGGTVTRARRKKTIKLAKGYFGSKHTLYKVAKQQVMKSGQYAFRDRRQRKRDFRKLWITRINAAARQHDISYSRLMNGLKKAEIDINRKMLSEIAISDDKAFAELVSKAKEALK.

Belongs to the bacterial ribosomal protein bL20 family.

Binds directly to 23S ribosomal RNA and is necessary for the in vitro assembly process of the 50S ribosomal subunit. It is not involved in the protein synthesizing functions of that subunit. This Staphylococcus epidermidis (strain ATCC 35984 / DSM 28319 / BCRC 17069 / CCUG 31568 / BM 3577 / RP62A) protein is Large ribosomal subunit protein bL20.